The chain runs to 85 residues: ATP synthase epsilon chain (85 aa).

This sequence belongs to the ATPase epsilon chain family. F-type ATPases have 2 components, CF(1) - the catalytic core - and CF(0) - the membrane proton channel. CF(1) has five subunits: alpha(3), beta(3), gamma(1), delta(1), epsilon(1). CF(0) has three main subunits: a, b and c.

The protein localises to the cell membrane. Produces ATP from ADP in the presence of a proton gradient across the membrane. The protein is ATP synthase epsilon chain of Frankia casuarinae (strain DSM 45818 / CECT 9043 / HFP020203 / CcI3).